Consider the following 373-residue polypeptide: Alpha-ketoglutarate dependent kainoid synthase (373 aa).

Residues 204-320 (TINSKKMFFT…RSSLITFYEP (117 aa)) form the Fe2OG dioxygenase domain. Positions 235, 237, and 296 each coordinate Fe cation. Arg311 is a binding site for 2-oxoglutarate.

This sequence belongs to the iron/ascorbate-dependent oxidoreductase family. The cofactor is Fe(2+).

It catalyses the reaction N-(7'-carboxy-7'-demethylgeranyl)-L-glutamate + 2-oxoglutarate + O2 = isodomoate A + succinate + CO2 + H2O. The catalysed reaction is N-geranyl-L-glutamate + 2-oxoglutarate + O2 = dainate A + succinate + CO2 + H2O. It functions in the pathway secondary metabolite biosynthesis. Its function is as follows. Iron/ascorbate-dependent oxidoreductase: part of the gene cluster that mediates the biosynthesis of domoic acid (DA) and derivatives, natural products with neurochemical activity acting as ionotropic glutamate receptor (iGluR) agonists, thus being neurotoxins causing amnesic shellfish poisoning (ASP). Catalyzes the conversion of 7'-N-carboxy-L-geranyl-L-glutamic acid (cNGG) to isodomoic acid-A. Also mediates the conversion of N-geranyl-L-glutamic acid (L-NGG) to dainic acid A. The chain is Alpha-ketoglutarate dependent kainoid synthase from Pseudo-nitzschia multiseries (Marine planktonic diatom).